Here is a 377-residue protein sequence, read N- to C-terminus: Palmitoyltransferase ZDHHC16 (377 aa).

Residues 1 to 77 (MRGQRSLLLG…VYWLVDNVIR (77 aa)) lie on the Cytoplasmic side of the membrane. The chain crosses the membrane as a helical span at residues 78 to 98 (WFGVVFVVLVIVLTGSIVAIA). The Lumenal portion of the chain corresponds to 99-116 (YLCVLPLILRTYSVPRLC). The chain crosses the membrane as a helical span at residues 117–137 (WHFFYSHWNLILIVFHYYQAI). Residues 138-198 (TTPPGYPPQG…NNCVGHYNHR (61 aa)) are Cytoplasmic-facing. A DHHC domain is found at 155–205 (SICKKCIYPKPARTHHCSICNRCVLKMDHHCPWLNNCVGHYNHRYFFSFCF). The S-palmitoyl cysteine intermediate role is filled by cysteine 185. The helical transmembrane segment at 199-219 (YFFSFCFFMTLGCVYCSYGSW) threads the bilayer. Topologically, residues 220–266 (DLFREAYAAIEKMKQLDKNKLQAVANQTYHQTPPPIFSFRERMTHKS) are lumenal. Residues 267-287 (LVYLWFLCSSVALALGALTVW) form a helical membrane-spanning segment. Residues 288 to 377 (HAVLISRGET…TAHSASVMAV (90 aa)) lie on the Cytoplasmic side of the membrane.

Belongs to the DHHC palmitoyltransferase family. Interacts with ABL1. Interacts with COPS5/JAB1.

The protein localises to the endoplasmic reticulum membrane. It carries out the reaction L-cysteinyl-[protein] + hexadecanoyl-CoA = S-hexadecanoyl-L-cysteinyl-[protein] + CoA. In terms of biological role, palmitoyl acyltransferase that mediates palmitoylation of proteins such as PLN and ZDHHC6. Required during embryonic heart development and cardiac function, possibly by mediating palmitoylation of PLN, thereby affecting PLN phosphorylation and homooligomerization. Also required for eye development. Palmitoylates ZDHHC6, affecting the quaternary assembly of ZDHHC6, its localization, stability and function. May play a role in DNA damage response. May be involved in apoptosis regulation. Involved in the proliferation of neural stem cells by regulating the FGF/ERK pathway. The polypeptide is Palmitoyltransferase ZDHHC16 (Macaca fascicularis (Crab-eating macaque)).